We begin with the raw amino-acid sequence, 118 residues long: Large ribosomal subunit protein bL20 (118 aa).

This sequence belongs to the bacterial ribosomal protein bL20 family.

Functionally, binds directly to 23S ribosomal RNA and is necessary for the in vitro assembly process of the 50S ribosomal subunit. It is not involved in the protein synthesizing functions of that subunit. In Gluconobacter oxydans (strain 621H) (Gluconobacter suboxydans), this protein is Large ribosomal subunit protein bL20.